The following is a 239-amino-acid chain: Ubiquinone biosynthesis O-methyltransferase (239 aa).

S-adenosyl-L-methionine contacts are provided by R44, G63, D84, and M128.

Belongs to the methyltransferase superfamily. UbiG/COQ3 family.

It carries out the reaction a 3-demethylubiquinol + S-adenosyl-L-methionine = a ubiquinol + S-adenosyl-L-homocysteine + H(+). It catalyses the reaction a 3-(all-trans-polyprenyl)benzene-1,2-diol + S-adenosyl-L-methionine = a 2-methoxy-6-(all-trans-polyprenyl)phenol + S-adenosyl-L-homocysteine + H(+). Its pathway is cofactor biosynthesis; ubiquinone biosynthesis. Its function is as follows. O-methyltransferase that catalyzes the 2 O-methylation steps in the ubiquinone biosynthetic pathway. In Xanthomonas campestris pv. campestris (strain 8004), this protein is Ubiquinone biosynthesis O-methyltransferase.